Consider the following 502-residue polypeptide: Glycerol kinase (502 aa).

Residue Thr14 participates in ADP binding. The ATP site is built by Thr14, Thr15, and Ser16. Thr14 is a binding site for sn-glycerol 3-phosphate. Arg18 is an ADP binding site. 4 residues coordinate sn-glycerol 3-phosphate: Arg84, Glu85, Tyr136, and Asp246. Glycerol contacts are provided by Arg84, Glu85, Tyr136, Asp246, and Gln247. Residues Thr268 and Gly311 each coordinate ADP. ATP is bound by residues Thr268, Gly311, Gln315, and Gly412. Residues Gly412 and Asn416 each contribute to the ADP site.

This sequence belongs to the FGGY kinase family. Homotetramer and homodimer (in equilibrium). Heterodimer with EIIA-Glc. Binds 1 zinc ion per glycerol kinase EIIA-Glc dimer. The zinc ion is important for dimerization.

It carries out the reaction glycerol + ATP = sn-glycerol 3-phosphate + ADP + H(+). It functions in the pathway polyol metabolism; glycerol degradation via glycerol kinase pathway; sn-glycerol 3-phosphate from glycerol: step 1/1. With respect to regulation, activity of this regulatory enzyme is affected by several metabolites. Allosterically and non-competitively inhibited by fructose 1,6-bisphosphate (FBP) and unphosphorylated phosphocarrier protein EIIA-Glc (III-Glc), an integral component of the bacterial phosphotransferase (PTS) system. Key enzyme in the regulation of glycerol uptake and metabolism. Catalyzes the phosphorylation of glycerol to yield sn-glycerol 3-phosphate. In Escherichia coli O8 (strain IAI1), this protein is Glycerol kinase.